Consider the following 295-residue polypeptide: Ribosomal protein L11 methyltransferase (295 aa).

The S-adenosyl-L-methionine site is built by T150, G171, D193, and N232.

This sequence belongs to the methyltransferase superfamily. PrmA family.

Its subcellular location is the cytoplasm. The catalysed reaction is L-lysyl-[protein] + 3 S-adenosyl-L-methionine = N(6),N(6),N(6)-trimethyl-L-lysyl-[protein] + 3 S-adenosyl-L-homocysteine + 3 H(+). Its function is as follows. Methylates ribosomal protein L11. In Neisseria meningitidis serogroup B (strain ATCC BAA-335 / MC58), this protein is Ribosomal protein L11 methyltransferase.